A 607-amino-acid polypeptide reads, in one-letter code: Hemagglutinin glycoprotein (607 aa).

At 1 to 37 the chain is on the intravirion side; sequence MLSYQDKVGAFYKDNARANSSKLSLVTEEQGGRRPPY. A helical membrane pass occupies residues 38 to 58; the sequence is LLFVLLILLVGIMALLAITGV. Over 59 to 607 the chain is Virion surface; that stretch reads RFHQVSTSNM…IRFSCSRSKP (549 aa). 6 N-linked (GlcNAc...) asparagine; by host glycosylation sites follow: asparagine 149, asparagine 309, asparagine 391, asparagine 422, asparagine 456, and asparagine 587.

Belongs to the paramyxoviruses hemagglutinin-neuraminidase family. Non-sialidase subfamily. Binds canine SLAMF1 at the cell surface.

The protein localises to the virion membrane. It is found in the host cell membrane. Attaches the virus to cell receptors and thereby initiating infection. Binding of H protein to the receptor induces a conformational change that allows the F protein to trigger virion/cell membranes fusion. The cellular receptor might be SLAM, and may explain the lymphotropism of the virus. In Canine distemper virus (strain A92-6) (CDV), this protein is Hemagglutinin glycoprotein (H).